The chain runs to 197 residues: Probable GTP-binding protein EngB (197 aa).

Positions K22–F195 constitute an EngB-type G domain. GTP-binding positions include G30–S37, G57–L61, D75–G78, T142–D145, and F174–S176. Positions 37 and 59 each coordinate Mg(2+).

This sequence belongs to the TRAFAC class TrmE-Era-EngA-EngB-Septin-like GTPase superfamily. EngB GTPase family. Mg(2+) is required as a cofactor.

Functionally, necessary for normal cell division and for the maintenance of normal septation. The sequence is that of Probable GTP-binding protein EngB from Clostridium kluyveri (strain ATCC 8527 / DSM 555 / NBRC 12016 / NCIMB 10680 / K1).